We begin with the raw amino-acid sequence, 157 residues long: Oocyte zinc finger protein XlCOF2 (157 aa).

C2H2-type zinc fingers lie at residues 6 to 28 (FTCT…MRIH), 34 to 56 (YSCA…QKNP), 79 to 101 (FTCT…QRLH), 107 to 129 (FSCA…QNTH), and 135 to 157 (FTCT…QKIH).

Belongs to the krueppel C2H2-type zinc-finger protein family.

The protein resides in the nucleus. Functionally, may be involved in transcriptional regulation. The chain is Oocyte zinc finger protein XlCOF2 from Xenopus laevis (African clawed frog).